Here is a 183-residue protein sequence, read N- to C-terminus: Bifunctional protein PyrR (183 aa).

Substrate contacts are provided by residues 42 to 43 (TR), R87, 104 to 112 (DDVLYTGRT), R137, and V161. A PRPP-binding motif is present at residues 100–112 (VILVDDVLYTGRT).

This sequence belongs to the purine/pyrimidine phosphoribosyltransferase family. PyrR subfamily.

It carries out the reaction UMP + diphosphate = 5-phospho-alpha-D-ribose 1-diphosphate + uracil. Regulates the transcription of the pyrimidine nucleotide (pyr) operon in response to exogenous pyrimidines. In terms of biological role, also displays a weak uracil phosphoribosyltransferase activity which is not physiologically significant. The sequence is that of Bifunctional protein PyrR from Deinococcus radiodurans (strain ATCC 13939 / DSM 20539 / JCM 16871 / CCUG 27074 / LMG 4051 / NBRC 15346 / NCIMB 9279 / VKM B-1422 / R1).